The chain runs to 1412 residues: Ecdysone-induced protein 75B, isoform B (1412 aa).

Residues 1–14 (MEAVQAAAAATSSG) are compositionally biased toward low complexity. 4 disordered regions span residues 1-96 (MEAV…PGGT), 110-204 (QRAT…QQHV), 258-298 (QYQQ…VPPP), and 321-448 (HFQQ…SIPD). Residues 15-25 (GSSGSVPGSGS) show a composition bias toward gly residues. Residues 32–57 (IKTEPIDFEMLHLEENERQQDIEREP) show a composition bias toward basic and acidic residues. Positions 58-68 (SSSNSNSNSNS) are enriched in low complexity. The span at 69–81 (LTPQRYTHVQVQT) shows a compositional bias: polar residues. Low complexity predominate over residues 87 to 96 (PTGLTTPGGT). The span at 124-133 (YSQQQGTAAS) shows a compositional bias: polar residues. Positions 135–150 (SAPPETTALLTTTSGT) are enriched in low complexity. Positions 151 to 164 (PQIIITRTLPSNQH) are enriched in polar residues. The span at 177–203 (HHYQQQQPQRQQSPPPLHHQQQQQQQH) shows a compositional bias: low complexity. Positions 266–284 (PLAPPPPPPPPPPPPPPPQ) are enriched in pro residues. Composition is skewed to low complexity over residues 323-371 (QQQQ…SSHI), 378-403 (SSSS…NSVM), and 417-447 (ASSS…SSIP). A DNA-binding region (nuclear receptor) is located at residues 455-531 (TVLCRVCGDK…VGMSRDAVRF (77 aa)). 2 NR C4-type zinc fingers span residues 458–478 (CRVC…CEGC) and 495–514 (CTKN…CQYC). Positions 565-813 (DQPRLLAAVL…QQMWSMEDGN (249 aa)) constitute an NR LBD domain. Disordered stretches follow at residues 837 to 878 (KSPL…SALA), 984 to 1021 (LDSP…SVDD), 1044 to 1064 (VSVS…KRQI), 1108 to 1174 (AEAD…SSHS), 1204 to 1317 (ENST…SNSA), and 1368 to 1401 (VTVT…NPGL). Composition is skewed to low complexity over residues 854-866 (GSPS…GVSL), 1005-1017 (SSGG…SPRS), 1044-1058 (VSVS…STSS), 1110-1155 (ADAS…AQSQ), and 1163-1174 (SSPKASMASSHS). Polar residues-rich tracts occupy residues 1206 to 1219 (STAA…VGNR) and 1231 to 1253 (AVQN…QRQQ). Composition is skewed to low complexity over residues 1254-1290 (SVSP…SASS), 1299-1317 (STSN…SNSA), and 1372-1400 (ASNG…PNPG).

Belongs to the nuclear hormone receptor family. NR1 subfamily.

The protein localises to the nucleus. Its function is as follows. Implicated in the regulation of ecdysone-triggered gene hierarchies. Probably plays a key role in mediating the regulation of the larval molt by 20-OH-ecdysone. This chain is Ecdysone-induced protein 75B, isoform B (Eip75B), found in Drosophila melanogaster (Fruit fly).